We begin with the raw amino-acid sequence, 279 residues long: Thioredoxin-like 1-2, chloroplastic (279 aa).

The transit peptide at 1–34 (MAATAAQAVAVKGSVAVPPCGSRGRRRGAVASVR) directs the protein to the chloroplast. The 143-residue stretch at 61–203 (PRRSRPVPRN…FRDALAKHKP (143 aa)) folds into the Thioredoxin domain. Active-site nucleophile residues include C126 and C129. A disulfide bridge connects residues C126 and C129. The disordered stretch occupies residues 242 to 279 (GDAAAAQELDRGSTKLSPPAKPLVKQGSEERSLVSSGR).

The protein belongs to the thioredoxin family.

It localises to the plastid. Its subcellular location is the chloroplast. In terms of biological role, probable thiol-disulfide oxidoreductase that may participate in various redox reactions. The protein is Thioredoxin-like 1-2, chloroplastic of Oryza sativa subsp. japonica (Rice).